A 534-amino-acid chain; its full sequence is MSDVSNEAARRRTFAIISHPDAGKTTLTEKLLLFGGAIQMAGSVKGRKAARHATSDWMALEKERGISVTSSVMQFPYEGKIVNLLDTPGHADFGEDTYRVLTAVDSALMVIDVAKGVEERTIKLMEVCRLRDTPIMTFINKLDREGKNPIDLLDEVETVLGIQCAPVTWPIGMGQRLKGVVHLISGEVHLYEQGRNFTRQDSTIFPSLDAPGLAEKIGEQMLTELRDELELVQGASNPFDLDAYRAGQQTPVFFGSGVNNFGVQPLLDFFIEHAPPPQTRETTGRRVAPSETKLSGFVFKIQANMDPQHRDRVAFMRVCSGKFTAGMKTLHVRSGKDVKLANALTFMASDREIAAEAWPGDVIGIHNHGTISIGDTFTEGESLSFTGIPNFAPELFRRARLRDPLKLKQLQKGLAQLSEEGATQFFRPLMSNDLILGAVGVLQFDVVAYRLKDEYGVDAIFEPVSVTTARWVHCDNVKKLDEFREKNAGNLGIDAAGQLVYLAPTRVNLQLAQERAPDVRFSATREHAHAKAID.

Positions 9 to 278 (ARRRTFAIIS…FFIEHAPPPQ (270 aa)) constitute a tr-type G domain. GTP is bound by residues 18–25 (SHPDAGKT), 86–90 (DTPGH), and 140–143 (NKLD).

The protein belongs to the TRAFAC class translation factor GTPase superfamily. Classic translation factor GTPase family. PrfC subfamily.

It is found in the cytoplasm. Increases the formation of ribosomal termination complexes and stimulates activities of RF-1 and RF-2. It binds guanine nucleotides and has strong preference for UGA stop codons. It may interact directly with the ribosome. The stimulation of RF-1 and RF-2 is significantly reduced by GTP and GDP, but not by GMP. This chain is Peptide chain release factor 3, found in Xanthomonas oryzae pv. oryzae (strain MAFF 311018).